We begin with the raw amino-acid sequence, 322 residues long: DNA repair and recombination protein RadA (322 aa).

105–112 (GMFGSGKT) lines the ATP pocket.

The protein belongs to the eukaryotic RecA-like protein family.

Its function is as follows. Involved in DNA repair and in homologous recombination. Binds and assemble on single-stranded DNA to form a nucleoprotein filament. Hydrolyzes ATP in a ssDNA-dependent manner and promotes DNA strand exchange between homologous DNA molecules. The sequence is that of DNA repair and recombination protein RadA from Methanococcus maripaludis (strain DSM 14266 / JCM 13030 / NBRC 101832 / S2 / LL).